The chain runs to 159 residues: Ribosomal RNA large subunit methyltransferase H (159 aa).

Residues Leu76, Gly108, and 127-132 (FSKMTF) each bind S-adenosyl-L-methionine.

This sequence belongs to the RNA methyltransferase RlmH family. As to quaternary structure, homodimer.

It localises to the cytoplasm. It catalyses the reaction pseudouridine(1915) in 23S rRNA + S-adenosyl-L-methionine = N(3)-methylpseudouridine(1915) in 23S rRNA + S-adenosyl-L-homocysteine + H(+). Its function is as follows. Specifically methylates the pseudouridine at position 1915 (m3Psi1915) in 23S rRNA. The sequence is that of Ribosomal RNA large subunit methyltransferase H from Halalkalibacterium halodurans (strain ATCC BAA-125 / DSM 18197 / FERM 7344 / JCM 9153 / C-125) (Bacillus halodurans).